The following is a 483-amino-acid chain: Cysteine proteinase 1, mitochondrial (483 aa).

The transit peptide at 1–30 (MLPTSVSRSLYLKTFRSHLLRAPQIVLKRM) directs the protein to the mitochondrion. Catalysis depends on residues cysteine 102, histidine 398, and asparagine 421. A propeptide (removed in mature form; by autocatalysis) is located at residue lysine 483.

It belongs to the peptidase C1 family. As to quaternary structure, homohexamer. Binds to nucleic acids. Binds single-stranded DNA and RNA with higher affinity than double-stranded DNA. In terms of processing, the N-terminus of isoform Cytoplasmic is blocked.

It is found in the mitochondrion. Its subcellular location is the cytoplasm. The enzyme catalyses Inactivates bleomycin B2 (a cytotoxic glycometallopeptide) by hydrolysis of a carboxyamide bond of beta-aminoalanine, but also shows general aminopeptidase activity. The specificity varies somewhat with source, but amino acid arylamides of Met, Leu and Ala are preferred.. With respect to regulation, inhibited by E64, a specific inhibitor of cysteine proteases, N-ethylmaleimide, iodacetamide, and mercury and zinc ions. The normal physiological role of the enzyme is unknown, but it is not essential for the viability of yeast cells. Has aminopeptidase activity, shortening substrate peptides sequentially by 1 amino acid. Has bleomycin hydrolase activity, which can protect the cell from the toxic effects of bleomycin. Has homocysteine-thiolactonase activity, protecting the cell against homocysteine toxicity. Acts as a repressor in the GAL4 regulatory system, but this does not require either the peptidase or nucleic acid-binding activities. The protein is Cysteine proteinase 1, mitochondrial (LAP3) of Saccharomyces cerevisiae (strain AWRI1631) (Baker's yeast).